Consider the following 109-residue polypeptide: Glutaredoxin 4 (109 aa).

A Glutaredoxin domain is found at L4–Y106. K21 contributes to the glutathione binding site. C29 contacts [2Fe-2S] cluster. Residues R58, F70, and C83–D84 contribute to the glutathione site.

The protein belongs to the glutaredoxin family. Monothiol subfamily. As to quaternary structure, homodimer.

It localises to the cytoplasm. In terms of biological role, monothiol glutaredoxin involved in the biogenesis of iron-sulfur clusters. This chain is Glutaredoxin 4 (grxD), found in Pasteurella multocida (strain Pm70).